The primary structure comprises 504 residues: L-amino-acid oxidase (504 aa).

Positions methionine 1–cysteine 18 are cleaved as a signal peptide. Cysteine 28 and cysteine 191 are oxidised to a cystine. FAD is bound by residues methionine 61–serine 62, glutamate 81–alanine 82, arginine 89, and glycine 105–arginine 108. Arginine 108 serves as a coordination point for substrate. Asparagine 190 carries an N-linked (GlcNAc...) asparagine glycan. Histidine 241 serves as a coordination point for substrate. Valine 279 provides a ligand contact to FAD. The cysteines at positions 349 and 430 are disulfide-linked. Asparagine 379 is a glycosylation site (N-linked (GlcNAc...) asparagine). Substrate is bound at residue tyrosine 390. FAD is bound by residues glutamate 475 and glycine 482–threonine 487. Substrate is bound at residue glycine 482–tryptophan 483.

The protein belongs to the flavin monoamine oxidase family. FIG1 subfamily. As to quaternary structure, homodimer; non-covalently linked. Requires FAD as cofactor. As to expression, expressed by the venom gland.

The protein localises to the secreted. It catalyses the reaction an L-alpha-amino acid + O2 + H2O = a 2-oxocarboxylate + H2O2 + NH4(+). Its function is as follows. Catalyzes an oxidative deamination of predominantly hydrophobic and aromatic L-amino acids, thus producing hydrogen peroxide that may contribute to the diverse toxic effects of this enzyme. Exhibits diverse biological activities, such as hemorrhage, hemolysis, edema, apoptosis of vascular endothelial cells or tumor cell lines, antibacterial and antiparasitic activities, as well as regulation of platelet aggregation. Its effect on platelets is controversial, since it either induces aggregation or inhibits agonist-induced aggregation. These different effects are probably due to different experimental conditions. This chain is L-amino-acid oxidase, found in Echis ocellatus (Ocellated saw-scaled viper).